The chain runs to 592 residues: MRTHYCGHVSETDLDQEVTLCGWAHRRRDHGGVIFIDLRDREGLVQVVFDPDRPETFALAERVRSEFVLKVRGRVRRRPAGTENPDLPTGQVEVLGLELDLLNPAKTPPFQLDEHEQAGEDVRLRYRYVDLRRPEMLQRLRARARITSNLRRFLDEHGFLDIETPMLTRATPEGARDYLVPSRTHPGSFFALPQSPQLFKQLLMMAGMDRYYQIVRCFRDEDLRADRQPEFTQLDIETSFMDEEGIMHLTERMMRRLFADVLQVDLPDPFPRMGYAEAMARFGSDKPDLRIPLELVEVADLMGGVEFKVFAGPAADPRGRVAALHVPGGAGLTRKQIDDYTQFVGRYGAKGLAYIKVNDPAQGREGLQSPILKFLTDEAVDGILRRTEARAGDLIFFGADKAKVVNDALGALRVKLGHDLAMVEDEWRPLWVVDFPMFEYDEKDGRLYALHHPFTAPNVDDPAELADKDPEQLVSRAYDMVLNGTELGGGSVRIHRQDMQQAVFRLLGIDEDEARAKFGFLLDALEYGAPPHGGIAFGLDRLVMLMTGASSIREVMAFPKTQTAACLLTDAPAEVDIAQLQELALRITKPQA.

Glutamate 173 is an L-aspartate binding site. Positions 197–200 (QLFK) are aspartate. L-aspartate is bound at residue arginine 219. Residues 219 to 221 (RDE) and glutamine 228 contribute to the ATP site. An L-aspartate-binding site is contributed by histidine 451. Glutamate 486 serves as a coordination point for ATP. Residue arginine 493 participates in L-aspartate binding. 538 to 541 (GLDR) lines the ATP pocket.

The protein belongs to the class-II aminoacyl-tRNA synthetase family. Type 1 subfamily. In terms of assembly, homodimer.

It localises to the cytoplasm. The enzyme catalyses tRNA(Asx) + L-aspartate + ATP = L-aspartyl-tRNA(Asx) + AMP + diphosphate. Its function is as follows. Aspartyl-tRNA synthetase with relaxed tRNA specificity since it is able to aspartylate not only its cognate tRNA(Asp) but also tRNA(Asn). Reaction proceeds in two steps: L-aspartate is first activated by ATP to form Asp-AMP and then transferred to the acceptor end of tRNA(Asp/Asn). This is Aspartate--tRNA(Asp/Asn) ligase from Alkalilimnicola ehrlichii (strain ATCC BAA-1101 / DSM 17681 / MLHE-1).